A 350-amino-acid chain; its full sequence is Neutral protease 2 homolog SNOG_10522 (350 aa).

The N-terminal stretch at 1–18 (MKVSSQLAVAALASFATA) is a signal peptide. A propeptide spanning residues 19 to 180 (ASVDVHKRET…AKALNKRTAI (162 aa)) is cleaved from the precursor. 2 cysteine pairs are disulfide-bonded: C184–C251 and C258–C276. H301 is a binding site for Zn(2+). The active site involves E302. Zn(2+)-binding residues include H305 and D316.

It belongs to the peptidase M35 family. It depends on Zn(2+) as a cofactor.

It localises to the secreted. The enzyme catalyses Preferential cleavage of bonds with hydrophobic residues in P1'. Also 3-Asn-|-Gln-4 and 8-Gly-|-Ser-9 bonds in insulin B chain.. Secreted metalloproteinase that allows assimilation of proteinaceous substrates. Shows high activities on basic nuclear substrates such as histone and protamine. The sequence is that of Neutral protease 2 homolog SNOG_10522 from Phaeosphaeria nodorum (strain SN15 / ATCC MYA-4574 / FGSC 10173) (Glume blotch fungus).